Consider the following 229-residue polypeptide: Ribonuclease 3 (229 aa).

Residues 5 to 127 (LSRLERKLGH…LIGAIYLDAG (123 aa)) enclose the RNase III domain. Position 40 (E40) interacts with Mg(2+). Residue D44 is part of the active site. Mg(2+)-binding residues include D113 and E116. E116 is an active-site residue. Residues 154–224 (DPKTRLQEFL…AAAALIALGV (71 aa)) enclose the DRBM domain.

It belongs to the ribonuclease III family. As to quaternary structure, homodimer. Mg(2+) is required as a cofactor.

The protein localises to the cytoplasm. It carries out the reaction Endonucleolytic cleavage to 5'-phosphomonoester.. Digests double-stranded RNA. Involved in the processing of primary rRNA transcript to yield the immediate precursors to the large and small rRNAs (23S and 16S). Processes some mRNAs, and tRNAs when they are encoded in the rRNA operon. Processes pre-crRNA and tracrRNA of type II CRISPR loci if present in the organism. This is Ribonuclease 3 from Ectopseudomonas mendocina (strain ymp) (Pseudomonas mendocina).